A 2042-amino-acid chain; its full sequence is Protein mini spindles (2042 aa).

TOG regions lie at residues 1 to 229 (MAED…VEPS) and 267 to 505 (MDLL…KVAG). The binds tubulin stretch occupies residues 1–505 (MAEDTEYKKL…KAEIKIKVAG (505 aa)). Promotes microtubule polymerization regions lie at residues 1–516 (MAED…ASAP) and 581–1080 (TPEE…EKAR). 7 HEAT repeats span residues 120 to 157 (EKQEAVVEELVKGMEAKNPKIVSACVAATTLALREFGH), 160 to 197 (IGVKPLIKKLAPLMSDRDKTVRDEGKQLAVEIYRWIGA), 270 to 311 (LDPV…DHPK), 315 to 353 (GEYGALVSALKKVITKDSNVVLVAMAGKCLALLAKGLAK), 357 to 394 (NYASACVPSLLEKFKEKKPNVVTALREAIDAIYASTSL), 396 to 433 (AQQESIVESLSNKNPSVKSETALFIARALTRTQPTALN), and 440 to 478 (LTTSLVKTLNEPDPTVRDSSAEALGTLIKLMGDKAVTPL). Residues 498–821 (EIKIKVAGPK…PKPVRGVQRS (324 aa)) form an association with microtubule lattice region. The segment at 506–572 (PKKETRPASA…PTAALKAGGK (67 aa)) is disordered. Positions 513–531 (ASAPTAKAAAPAKTVAGSV) are enriched in low complexity. The TOG 3 stretch occupies residues 581-814 (TPEELQEKSE…KNVGEKPPKP (234 aa)). 4 HEAT repeats span residues 587–624 (EKSEEILPAEILNGLVDSNWKNRLAAVEQLLGEISGFD), 625–662 (AKQAGISQILIRTISGRKPGLKEMNFQVLKFKLDIIRS), 672–710 (TTVDLVINEIIEKLADAKNGAAAADVLSAFAEATKLEYV), and 745–782 (LQPKTLIEDVRKGVQSTNPTVRASAIQMVGTMSMYMGK). Residues 804–849 (DKNVGEKPPKPVRGVQRSSGGTAGNSPDNEDDDGGAAGEEEPINMA) form a disordered region. Residues 819-830 (QRSSGGTAGNSP) show a composition bias toward polar residues. The span at 831-845 (DNEDDDGGAAGEEEP) shows a compositional bias: acidic residues. TOG stretches follow at residues 849-1087 (ADLL…PVKP) and 1179-1415 (TELL…KPTP). 4 HEAT repeats span residues 856 to 893 (DIAPQITEALLKEMSDKDWKTRNEGLTKLQAIISEARL), 896 to 933 (PSIGDLAPALAHRLVDSNAKIAQTTLAICEQLATAMGA), 937 to 974 (NHVRNLFPGFLHALGDNKSFVRAAALNCINSFGEKGGY), and 1017 to 1054 (EDIHSMVPHLYAHICDRNADVRKNANEAVLGIMIHLGF). Residues 1083-1140 (LPVKPLPKGKHQAPIPEEPKLKTVRGGGAGGAPGIQKSATARVAGGQDKQVPARKKDE) are disordered. Positions 1099-1428 (EEPKLKTVRG…VDVPAPQRHD (330 aa)) are association with microtubule lattice. HEAT repeat units lie at residues 1205-1242 (RYHLKVIEQLSEDLAGNSKALVCNLDLILKWLTLRFYD), 1272-1309 (NEGSSFVPHLLLKIGDPKDAVRNGVRRVLRQVILVFPF), 1311-1344 (KVFGYVMEGLKSKNARQRTECLDELTFLIESYGM), and 1346-1383 (ICPQSAVREIARQISDRDNSVRNAALNCIVQVFFLSGE). Disordered regions lie at residues 1407-1455 (AKKT…TFDQ) and 1940-1959 (NAGSTQDNRTDVNYQNNGPD). Residues 1940 to 1957 (NAGSTQDNRTDVNYQNNG) are compositionally biased toward polar residues.

This sequence belongs to the TOG/XMAP215 family. Interacts with tacc, dgt6. Interacts with mv. Interacts with Patronin.

Its subcellular location is the cytoplasm. The protein resides in the cytoskeleton. It localises to the microtubule organizing center. It is found in the centrosome. The protein localises to the spindle. Its subcellular location is the perinuclear region. In terms of biological role, binds to the plus end of microtubules and regulates microtubule dynamics and microtubule organization. Function in neurons is essential for adult survival, and is important for climbing behavior and activity. Promotes cytoplasmic microtubule nucleation and elongation. May act as a microtubule antipause factor that rapidly catalyzes the transition from pause to either growth or shrinkage. Involved in mitotic spindle elongation. Involved in the establishment of cell polarity and mitotic spindle orientation in neuroblasts. Required for maintaining the bipolarity of acentrosomal meiotic spindles; the function is dependent on tacc and involves ncd. Involved in oocyte microtubule cytoskeleton organization and bicoid mRNA localization. Seems to be involved in elongation of kinetochore-derived microtubule fibers. In fat body cells, essential component of perinuclear non-centrosomal microtubule-organizing centers (ncMTOCs) which function to accommodate the organization of microtubule (MT) networks to control nuclear positioning and dynein motor-based retrograde endosomal trafficking. Within the ncMTOCs, Msp300 and shot anchors the ncMTOC at the nuclear surface and recruits the MT minus-end regulators Patronin and Nin for assembly, anchoring and/or stabilization of circumferential and radial MTs at the ncMTOCs. Patronin, and perhaps Nin, then recruits msps to the ncMTOC where it is required for the gamma-tubulin-independent elongation and assembly of radial MTs. The chain is Protein mini spindles (msps) from Drosophila melanogaster (Fruit fly).